The primary structure comprises 312 residues: Glycerol-3-phosphate dehydrogenase [NAD(P)+] (312 aa).

NADPH contacts are provided by Trp11, Arg30, Arg31, and Lys95. Residues Lys95, Gly123, and Ser125 each coordinate sn-glycerol 3-phosphate. Ala127 contacts NADPH. Sn-glycerol 3-phosphate-binding residues include Lys177, Asp230, Ser240, Arg241, and Asn242. The Proton acceptor role is filled by Lys177. Arg241 serves as a coordination point for NADPH. NADPH is bound by residues Val265 and Glu267.

This sequence belongs to the NAD-dependent glycerol-3-phosphate dehydrogenase family.

The protein localises to the cytoplasm. It carries out the reaction sn-glycerol 3-phosphate + NAD(+) = dihydroxyacetone phosphate + NADH + H(+). The catalysed reaction is sn-glycerol 3-phosphate + NADP(+) = dihydroxyacetone phosphate + NADPH + H(+). The protein operates within membrane lipid metabolism; glycerophospholipid metabolism. Functionally, catalyzes the reduction of the glycolytic intermediate dihydroxyacetone phosphate (DHAP) to sn-glycerol 3-phosphate (G3P), the key precursor for phospholipid synthesis. This chain is Glycerol-3-phosphate dehydrogenase [NAD(P)+], found in Helicobacter pylori (strain P12).